A 623-amino-acid chain; its full sequence is Peptidoglycan D,D-transpeptidase MrdA (623 aa).

A helical membrane pass occupies residues 17-37 (VIVAFGVVVVCFGILIFNLYN). Serine 326 acts as the Acyl-ester intermediate in catalysis.

It belongs to the transpeptidase family. MrdA subfamily.

The protein resides in the cell inner membrane. It carries out the reaction Preferential cleavage: (Ac)2-L-Lys-D-Ala-|-D-Ala. Also transpeptidation of peptidyl-alanyl moieties that are N-acyl substituents of D-alanine.. It participates in cell wall biogenesis; peptidoglycan biosynthesis. In terms of biological role, catalyzes cross-linking of the peptidoglycan cell wall. The sequence is that of Peptidoglycan D,D-transpeptidase MrdA from Salmonella typhimurium (strain SL1344).